The following is a 550-amino-acid chain: Hydroxylamine reductase (550 aa).

Positions 3, 6, 18, and 25 each coordinate [2Fe-2S] cluster. Residues His249, Glu273, Cys317, Cys405, Cys433, Cys458, Glu492, and Lys494 each coordinate hybrid [4Fe-2O-2S] cluster. Cys405 is subject to Cysteine persulfide.

It belongs to the HCP family. The cofactor is [2Fe-2S] cluster. It depends on hybrid [4Fe-2O-2S] cluster as a cofactor.

It is found in the cytoplasm. It catalyses the reaction A + NH4(+) + H2O = hydroxylamine + AH2 + H(+). In terms of biological role, catalyzes the reduction of hydroxylamine to form NH(3) and H(2)O. This chain is Hydroxylamine reductase, found in Escherichia coli (strain SE11).